Consider the following 343-residue polypeptide: N-acetyl-gamma-glutamyl-phosphate reductase (343 aa).

Residue Cys147 is part of the active site.

Belongs to the NAGSA dehydrogenase family. Type 1 subfamily.

Its subcellular location is the cytoplasm. It catalyses the reaction N-acetyl-L-glutamate 5-semialdehyde + phosphate + NADP(+) = N-acetyl-L-glutamyl 5-phosphate + NADPH + H(+). Its pathway is amino-acid biosynthesis; L-arginine biosynthesis; N(2)-acetyl-L-ornithine from L-glutamate: step 3/4. In terms of biological role, catalyzes the NADPH-dependent reduction of N-acetyl-5-glutamyl phosphate to yield N-acetyl-L-glutamate 5-semialdehyde. The chain is N-acetyl-gamma-glutamyl-phosphate reductase from Listeria welshimeri serovar 6b (strain ATCC 35897 / DSM 20650 / CCUG 15529 / CIP 8149 / NCTC 11857 / SLCC 5334 / V8).